A 359-amino-acid chain; its full sequence is Peptide chain release factor 1 (359 aa).

Gln236 is modified (N5-methylglutamine). Positions 288–307 (QDEQDAERKSTIGTGDRSER) are disordered. The segment covering 293–307 (AERKSTIGTGDRSER) has biased composition (basic and acidic residues).

It belongs to the prokaryotic/mitochondrial release factor family. In terms of processing, methylated by PrmC. Methylation increases the termination efficiency of RF1.

It is found in the cytoplasm. Functionally, peptide chain release factor 1 directs the termination of translation in response to the peptide chain termination codons UAG and UAA. This chain is Peptide chain release factor 1 (prfA), found in Streptococcus gordonii (strain Challis / ATCC 35105 / BCRC 15272 / CH1 / DL1 / V288).